The following is a 60-amino-acid chain: Cytotoxin 7 (60 aa).

4 disulfides stabilise this stretch: cysteine 3–cysteine 21, cysteine 14–cysteine 38, cysteine 42–cysteine 53, and cysteine 54–cysteine 59.

This sequence belongs to the three-finger toxin family. Short-chain subfamily. Type IA cytotoxin sub-subfamily. As to quaternary structure, monomer in solution; Homodimer and oligomer in the presence of negatively charged lipids forming a pore with a size ranging between 20 and 30 Angstroms. Expressed by the venom gland.

The protein localises to the secreted. Its subcellular location is the target cell membrane. Shows cytolytic activity on many different cells by forming pore in lipid membranes. In vivo, increases heart rate or kills the animal by cardiac arrest. In addition, it binds to heparin with high affinity, interacts with Kv channel-interacting protein 1 (KCNIP1) in a calcium-independent manner, and binds to integrin alpha-V/beta-3 (ITGAV/ITGB3) with moderate affinity. This is Cytotoxin 7 from Naja annulifera (Banded Egyptian cobra).